Reading from the N-terminus, the 680-residue chain is Dihydroxyacetone phosphate acyltransferase (680 aa).

Phosphoserine is present on residues serine 12 and serine 17. An HXXXXD motif motif is present at residues 162-167; that stretch reads HRSYID. Residue lysine 643 is modified to N6-acetyllysine. The Microbody targeting signal motif lies at 678–680; the sequence is AKL.

It belongs to the GPAT/DAPAT family. In terms of assembly, part of a heterotrimeric complex composed of GNPAT, AGPS and a modified form of GNPAT.

The protein resides in the peroxisome membrane. It catalyses the reaction dihydroxyacetone phosphate + an acyl-CoA = a 1-acylglycerone 3-phosphate + CoA. It carries out the reaction dihydroxyacetone phosphate + hexadecanoyl-CoA = 1-hexadecanoylglycerone 3-phosphate + CoA. The protein operates within membrane lipid metabolism; glycerophospholipid metabolism. Dihydroxyacetonephosphate acyltransferase catalyzing the first step in the biosynthesis of plasmalogens, a subset of phospholipids that differ from other glycerolipids by having an alkyl chain attached through a vinyl ether linkage at the sn-1 position of the glycerol backbone, and which unique physical properties have an impact on various aspects of cell signaling and membrane biology. The chain is Dihydroxyacetone phosphate acyltransferase from Bos taurus (Bovine).